A 747-amino-acid chain; its full sequence is Myotubularin-related protein 12 (747 aa).

Over residues 1-14 (MLGKGVVGGGGGTK) the composition is skewed to gly residues. Residues 1–21 (MLGKGVVGGGGGTKGPKPSFV) form a disordered region. Positions 205-643 (FDTLKDWCWE…PEIKVWAQRY (439 aa)) constitute a Myotubularin phosphatase domain. An interaction with MTM1 region spans residues 449–558 (VPVFLLFLDC…KGQRKGMRFK (110 aa)). Phosphoserine occurs at positions 564, 601, and 716.

Belongs to the protein-tyrosine phosphatase family. Non-receptor class myotubularin subfamily. In terms of assembly, heterodimer with lipid phosphatase MTM1. Heterodimer with lipid phosphatase MTMR2.

The protein localises to the cytoplasm. The protein resides in the sarcoplasmic reticulum. It is found in the myofibril. It localises to the sarcomere. Functionally, acts as an adapter for the myotubularin-related phosphatases. Regulates phosphatase MTM1 protein stability and possibly its intracellular location. By stabilizing MTM1 protein levels, required for skeletal muscle maintenance but not for myogenesis. This Pongo abelii (Sumatran orangutan) protein is Myotubularin-related protein 12 (MTMR12).